A 417-amino-acid polypeptide reads, in one-letter code: MAERVVLAYSGGLDTSVGIGWLKDATGKEVVALAVDVGQGGEDMEVIRQRALDCGAVEAVVVDAKDEFADDYIVPALKANALYQKRYPLVSGLSRPLIAKHLARVAHELGANSVAHGCTGKGNDQVRFEAAVAALAPDLTSIAPVRDLALTRDKAIVYANEHDLPIEQSKKSPYSIDKNVWGRAVETGFLEDPWNGPIEDLYEYTQDPDVLREATEVTITFEAGVPVAIDGIRYSPLRIVQELNAAAGAHGIGRIDVVEDRLVGIKSREVYEAPAAMTLIEAHEELEALTIERDLGRYKRGVEKDWANLVYDGLWFSGLKRSLDAFIEDSQRHVSGDIRMTLRGGRAVVTGRRSETSLYDFDLATYDTGDTFDQSLSKGFIELWSLPSKISARRDLAVEQAALAADDATPAAAPAAE.

8 to 16 (AYSGGLDTS) contacts ATP. Tyr-87 contributes to the L-citrulline binding site. Residue Gly-117 coordinates ATP. Positions 119, 123, and 124 each coordinate L-aspartate. Position 123 (Asn-123) interacts with L-citrulline. Arg-127, Ser-175, Glu-259, and Tyr-271 together coordinate L-citrulline.

It belongs to the argininosuccinate synthase family. Type 1 subfamily. In terms of assembly, homotetramer.

It localises to the cytoplasm. The enzyme catalyses L-citrulline + L-aspartate + ATP = 2-(N(omega)-L-arginino)succinate + AMP + diphosphate + H(+). It functions in the pathway amino-acid biosynthesis; L-arginine biosynthesis; L-arginine from L-ornithine and carbamoyl phosphate: step 2/3. The polypeptide is Argininosuccinate synthase (Clavibacter sepedonicus (Clavibacter michiganensis subsp. sepedonicus)).